A 189-amino-acid chain; its full sequence is Putative manganese efflux pump MntP (189 aa).

Helical transmembrane passes span 3 to 23, 41 to 61, 65 to 85, 104 to 124, 132 to 152, and 167 to 187; these read LSAT…ASIG, LIFG…GLFA, IMEW…CRMI, FWVL…IGVG, IVHT…LGML, and IIGG…HMHL.

The protein belongs to the MntP (TC 9.B.29) family.

The protein localises to the cell inner membrane. In terms of biological role, probably functions as a manganese efflux pump. This chain is Putative manganese efflux pump MntP, found in Yersinia pseudotuberculosis serotype O:1b (strain IP 31758).